Reading from the N-terminus, the 247-residue chain is ATP synthase subunit a, chloroplastic (247 aa).

Transmembrane regions (helical) follow at residues 36-56 (GQVL…SIAG), 95-115 (IPFL…GALI), 134-154 (INTT…AGFS), 199-219 (LVVG…IMLL), and 220-240 (GLFT…AYIG).

This sequence belongs to the ATPase A chain family. F-type ATPases have 2 components, CF(1) - the catalytic core - and CF(0) - the membrane proton channel. CF(1) has five subunits: alpha(3), beta(3), gamma(1), delta(1), epsilon(1). CF(0) has four main subunits: a, b, b' and c.

It localises to the plastid. The protein resides in the chloroplast thylakoid membrane. In terms of biological role, key component of the proton channel; it plays a direct role in the translocation of protons across the membrane. The polypeptide is ATP synthase subunit a, chloroplastic (Tupiella akineta (Green alga)).